Here is a 327-residue protein sequence, read N- to C-terminus: GMP reductase (327 aa).

The Thioimidate intermediate role is filled by Cys-175. 204 to 227 (IIADGGIRTPGDIAKSIRFGATMV) contributes to the NADP(+) binding site.

It belongs to the IMPDH/GMPR family. GuaC type 2 subfamily.

The enzyme catalyses IMP + NH4(+) + NADP(+) = GMP + NADPH + 2 H(+). Catalyzes the irreversible NADPH-dependent deamination of GMP to IMP. It functions in the conversion of nucleobase, nucleoside and nucleotide derivatives of G to A nucleotides, and in maintaining the intracellular balance of A and G nucleotides. This chain is GMP reductase, found in Clostridium acetobutylicum (strain ATCC 824 / DSM 792 / JCM 1419 / IAM 19013 / LMG 5710 / NBRC 13948 / NRRL B-527 / VKM B-1787 / 2291 / W).